The chain runs to 99 residues: Acylphosphatase (99 aa).

Residues 10–99 (RLTAFVHGHV…PRGVEGFTER (90 aa)) form the Acylphosphatase-like domain. Catalysis depends on residues Arg25 and Asn43.

This sequence belongs to the acylphosphatase family.

The enzyme catalyses an acyl phosphate + H2O = a carboxylate + phosphate + H(+). The chain is Acylphosphatase (acyP) from Corynebacterium efficiens (strain DSM 44549 / YS-314 / AJ 12310 / JCM 11189 / NBRC 100395).